Consider the following 536-residue polypeptide: MATASVAFKSREDHRKKLELEEARKAGLAPAEVDEDGKEINPHIPEYMSKAPWYLKSEQPSLKHQKNWKIEPEPKKIWYDRGKKIYQAEQYRKGACINCGAMTHSSKACMDRPRKIGAKYTNMNIAADEKIESFELDYDGKRDRWNGYDTSTYRHVVDRYDAKEEARKKYLKEQQLKKLEEKNNNENGDDATSDGEEDLDDLRVDEAKVDESRQMDFAKVEKRVRTTGGGSTGTVRNLRIREDTAKYLLNLDVNSAHYDPKTRSMREDPLPDADPNEKFYLGDNQYRNSGQALEFKQINIHSCEAFDKGHDMHMQAAPSQAELLYKNFKVAKEKLKTQTKDTIMEKYGNAATEGEIPMELLLGQSERQIEYDRAGRIMKGQEVIIPKSKYEEDVHANNHTSVWGSWWKDHQWGYKCCQQTIRNSYCTGSAGIEAAEASIDLMKANIARKEASKESPKKVEEKKMATWGTDIPEDLELNEEALANALKKEDLSRREEKDERKRKYNVNYTNDVTSEEMEAYRMKRVHHEDPMRNFPG.

The tract at residues 1-42 (MATASVAFKSREDHRKKLELEEARKAGLAPAEVDEDGKEINP) is disordered. Positions 9–25 (KSREDHRKKLELEEARK) are enriched in basic and acidic residues. A CCHC-type zinc finger spans residues 96–109 (CINCGAMTHSSKAC). Disordered regions lie at residues 176–201 (LKKLEEKNNNENGDDATSDGEEDLDD) and 488–507 (KEDLSRREEKDERKRKYNVN). Residues 187–200 (NGDDATSDGEEDLD) are compositionally biased toward acidic residues. Phosphoserine is present on serine 193. The short motif at 486-493 (LKKEDLSR) is the Nuclear localization signal element. The segment covering 488-501 (KEDLSRREEKDERK) has biased composition (basic and acidic residues).

It belongs to the SLU7 family. Interacts with PHYB in photobodies under red light.

The protein localises to the nucleus. In terms of biological role, participates in the second catalytic step of pre-mRNA splicing, when the free hydroxyl group of exon I attacks the 3'-splice site to generate spliced mRNA and the excised lariat intron. Splicing factor acting as a negative regulator of seedling photomorphogenesis by antagonizing PHYB signaling to promote light-induced hypocotyl elongation. Prevents the accumulation of functionally spliced RVE8a form, a circadian clock regulator mediating the transcriptional activation of clock genes containing evening elements (EE), but promotes PIF4 expression to fine-tune hypocotyl elongation in the light. Together with SMP1, involved in the timing of cell cycle arrest during leaf development, in a STRUWWELPETER (SWP) dependent manner; promotes cell proliferation in developing organs. The polypeptide is Pre-mRNA-splicing factor SLU7-B (Arabidopsis thaliana (Mouse-ear cress)).